We begin with the raw amino-acid sequence, 100 residues long: uncharacterized protein (100 aa).

Residues 68–88 form a helical membrane-spanning segment; that stretch reads VFLFFFTGSSPSFPAALLGLF.

Its subcellular location is the membrane. This is an uncharacterized protein from Saccharomyces cerevisiae (strain ATCC 204508 / S288c) (Baker's yeast).